Consider the following 87-residue polypeptide: Cell division topological specificity factor (87 aa).

This sequence belongs to the MinE family.

Prevents the cell division inhibition by proteins MinC and MinD at internal division sites while permitting inhibition at polar sites. This ensures cell division at the proper site by restricting the formation of a division septum at the midpoint of the long axis of the cell. This chain is Cell division topological specificity factor, found in Vibrio parahaemolyticus serotype O3:K6 (strain RIMD 2210633).